An 82-amino-acid chain; its full sequence is Large ribosomal subunit protein uL23 (82 aa).

The protein belongs to the universal ribosomal protein uL23 family. As to quaternary structure, part of the 50S ribosomal subunit. Contacts protein L29.

Its function is as follows. Binds to 23S rRNA. One of the proteins that surrounds the polypeptide exit tunnel on the outside of the ribosome. In Methanosarcina mazei (strain ATCC BAA-159 / DSM 3647 / Goe1 / Go1 / JCM 11833 / OCM 88) (Methanosarcina frisia), this protein is Large ribosomal subunit protein uL23.